A 189-amino-acid polypeptide reads, in one-letter code: Elongation factor P (189 aa).

It belongs to the elongation factor P family.

It is found in the cytoplasm. It functions in the pathway protein biosynthesis; polypeptide chain elongation. Its function is as follows. Involved in peptide bond synthesis. Stimulates efficient translation and peptide-bond synthesis on native or reconstituted 70S ribosomes in vitro. Probably functions indirectly by altering the affinity of the ribosome for aminoacyl-tRNA, thus increasing their reactivity as acceptors for peptidyl transferase. The protein is Elongation factor P of Ehrlichia ruminantium (strain Gardel).